Here is a 500-residue protein sequence, read N- to C-terminus: Glycogen synthase (500 aa).

Lys-15 lines the ADP-alpha-D-glucose pocket.

This sequence belongs to the glycosyltransferase 1 family. Bacterial/plant glycogen synthase subfamily.

The enzyme catalyses [(1-&gt;4)-alpha-D-glucosyl](n) + ADP-alpha-D-glucose = [(1-&gt;4)-alpha-D-glucosyl](n+1) + ADP + H(+). The protein operates within glycan biosynthesis; glycogen biosynthesis. Its function is as follows. Synthesizes alpha-1,4-glucan chains using ADP-glucose. This chain is Glycogen synthase, found in Protochlamydia amoebophila (strain UWE25).